Here is a 476-residue protein sequence, read N- to C-terminus: Phosphomethylpyrimidine synthase (476 aa).

Residues 1–27 form a disordered region; sequence MSTQLQHARDGTVTDAMRRVADREGRD. The segment covering 7–27 has biased composition (basic and acidic residues); that stretch reads HARDGTVTDAMRRVADREGRD. Substrate contacts are provided by residues Asn-67, Met-96, Tyr-125, His-160, 180–182, 221–224, and Glu-260; these read SRG and DGLR. Zn(2+) is bound at residue His-264. Tyr-287 lines the substrate pocket. Residue His-328 coordinates Zn(2+). Residues Cys-408, Cys-411, and Cys-416 each contribute to the [4Fe-4S] cluster site. Residues 425–476 are disordered; the sequence is RDAGDDADDMTELTTETDLSESAAAEVNRPPTGTHDAPAAEQAPSPGDDDDD. Residues 436 to 447 show a composition bias toward low complexity; that stretch reads ELTTETDLSESA.

Belongs to the ThiC family. [4Fe-4S] cluster serves as cofactor.

The enzyme catalyses 5-amino-1-(5-phospho-beta-D-ribosyl)imidazole + S-adenosyl-L-methionine = 4-amino-2-methyl-5-(phosphooxymethyl)pyrimidine + CO + 5'-deoxyadenosine + formate + L-methionine + 3 H(+). It functions in the pathway cofactor biosynthesis; thiamine diphosphate biosynthesis. In terms of biological role, catalyzes the synthesis of the hydroxymethylpyrimidine phosphate (HMP-P) moiety of thiamine from aminoimidazole ribotide (AIR) in a radical S-adenosyl-L-methionine (SAM)-dependent reaction. This chain is Phosphomethylpyrimidine synthase, found in Halobacterium salinarum (strain ATCC 29341 / DSM 671 / R1).